Here is a 2052-residue protein sequence, read N- to C-terminus: MNMSKQGIFQTVGSGLDHILSLADIEEEQMIQSVDRTAVTGASYFTSVDQSSVHTAEVGSHQIEPLKTSVDKPGSKKTQGEKFFLIHSADWLTTHALFHEVAKLDVVKLLYNEQFAVQGLLRYHTYARFGIEIQVQINPTPFQQGGLICAMVPGDQSYGSIASLTVYPHGLLNCNINNVVRIKVPFIYTRGAYHFKDPQYPVWELTIRVWSELNIGTGTSAYTSLNVLARFTDLELHGLTPLSTQMMRNEFRVSTTENVVNLSNYEDARAKMSFALDQEDWKSDPSQGGGIKITHFTTWTSIPTLAAQFPFNASDSVGQQIKVIPVDPYFFQMTNTNPDQKCITALASICQMFCFWRGDLVFDFQVFPTKYHSGRLLFCFVPGNELIDVTGITLKQATTAPCAVMDITGVQSTLRFRVPWISDTPYRVNRYTKSAHQKGEYTAIGKLIVYCYNRLTSPSNVASHVRVNVYLSAINLECFAPLYHAMDVTTQVGDDSGGFSTTVSTEQNVPDPQVGIKGKANRGKMDVSGVQAPVGAITTIEDPVLAKKVPETFPELKPGESRHTSDHMSIYKFMGRSHFLCTFTFNSNNKEYTFPITLSSTSNPPHGLPSTLRWFFNLFQLYRGPLDLTIIITGATDVDGMAWFTPVGLAVDTPWVEKKSALSIDYKTALGAVRFNTRRTGNIQIRLPWYSYLYAVSGALDGLGDKTDSTFGLVSIQIANYNHSDEYLSFSCYLSVTEQSEFYFPRAPLNSNAMLSTESMMSRIAAGDLESSVDDPRSEEDRRFESHIECRKPYKELRLEVGKQRLKYAQEELSNEVLPPPRKMKGLFSQAKISLFYTEEHEIMKFSWRGVTADTRALRRFGFSLAAGRSVWTLEMDAGVLTGRLIRLNDEKWTEMKDDKIVSLIEKFTSNKYWSKVNFPHGMLDLEEIAANSKDFPNMSETDLCFLLHWLNPKKINLADRMLGLSGVQEIKEQGVGLIAECRTFLDSIAGTLKSMIFGFHHSVTVEIINIVLCFIKSGILLYVIQQLNQDEHSHIIGLLRVMNYADIGCSVISCGKVFSKMLETVFNWQMDSRMMELRTQSFSNWLRDICSGITIFKSFKDAIYWLCTKLKDFYEVNYGKKKDVLNILKDNQQKIEKAIEEADNFCILQIQDVEKFDQYQTSNWSNPSPKTVYVKEAIDRRLHFKVEVKPASFFKNPHNDMLNVNLAKTNDAIKDMSCVDLIMDGHNISLMDLLSSLVMTVEIRKQNMSEFMELWSQGISDDDSAVAEFFQSFPSGEPSNSKLSSFFQSVTNHKWVAVGAAVGILGLLVGGWFVYKHFSRKEEEPIPAEGVYHGVTKPKQVIKLDADPVESQSTLEIAGLVRKNLVQFGVGEKNGCVRWVMNALGVKDDWLLVPSHAYKFEKDYEMMEFYFNRGGTYYSISAGNVVIQSLDVGFQDVVLMKVPTIPKFRDITQHFIKKGDVPRALNRLATLVTTVNGTPMLISEGPLKMEEKATYVHKKNDGTTVDLTVDQAWRGKGEGLPGMCGGALVSSNQSIQNAILGIHVAGGNSILVAKLITQEMFQNIDKKIESQRIMKVEFTQCSMNVVSKTLFRKSPIHHHIDKTMINFPAAMPFSKAEIDPMAMMLSKYSLPIVEEPEDYKEASVFYQNKIVGKTQLVDDFLDLDMAITGAPGIDAINMDSSPGFPYVQEKLTKRDLIWLDENGLLLGVHPRLAQRILFNTVMMENCSDLDVVFTTCPKDELRPLEKVLESKTRAIDACPLDYTILCRMYWGPAISYFHLNPGFHTGVAIGIDPDRQWDELFKTMIRFGDVGLDLDFSAFDASLSPFMIREAGRIMSELSGTPSHFGTALINTIIYSKHLLYNCCYHVCGSMPSGSPCTALLNSIINNINLYYVFSKIFGKSPVFFCQALRILCYGDDVLIVFSRDVQIDNLDLIGQKIVDEFKKLGMTATSADKNVPQLKPVSELTFLKRSFNLVEDRIRPAISEKTIWSLIAWQRSNAEFEQNLENAQWFAFMHGYEFYQKFYYFVQSCLEKEMIEYRLKSYDWWRMRFY.

2 consecutive short sequence motifs ((L)YPX(n)L motif) follow at residues 167 to 171 and 200 to 205; these read YPHGL and YPVWEL. The disordered stretch occupies residues 502 to 522; the sequence is TVSTEQNVPDPQVGIKGKANR. Residues 760–830 are involved in P1-2A pentamerization; that stretch reads MMSRIAAGDL…PRKMKGLFSQ (71 aa). The helical transmembrane segment at 1005-1025 threads the bilayer; it reads TVEIINIVLCFIKSGILLYVI. Residues 1037–1064 are membrane-penetrating ability; the sequence is IGLLRVMNYADIGCSVISCGKVFSKMLE. Positions 1121–1146 form a coiled coil; it reads KKKDVLNILKDNQQKIEKAIEEADNF. Residues 1296-1316 traverse the membrane as a helical segment; it reads WVAVGAAVGILGLLVGGWFVY. Residue Tyr1333 is modified to O-(5'-phospho-RNA)-tyrosine. In terms of domain architecture, Peptidase C3 spans 1348–1562; the sequence is DPVESQSTLE…VAKLITQEMF (215 aa). Active-site for protease 3C activity residues include His1397, Asp1437, and Cys1525. Positions 1810–1931 constitute a RdRp catalytic domain; sequence DVGLDLDFSA…VFSRDVQIDN (122 aa).

It belongs to the picornaviridae polyprotein family. As to quaternary structure, homodimer. Homomultimer; probably interacts with membranes in a multimeric form. Seems to assemble into amyloid-like fibers. In terms of assembly, homodimer. Monomer. Interacts with protein 3CD. Interacts with host ACBD3. As to quaternary structure, interacts with protein 3AB. In terms of assembly, interacts with human MAVS. Homodimer; disulfide-linked. As to quaternary structure, homopentamer. Homooligomer. In terms of assembly, interacts with capsid protein VP2. Interacts with capsid protein VP3. Interacts with capsid protein VP1. Interacts with capsid protein VP3. As to quaternary structure, interacts with capsid protein VP1. Interacts with capsid protein VP2. In terms of processing, specific enzymatic cleavages by viral protease in vivo yield a variety of precursors and mature proteins. Polyprotein processing intermediates are produced, such as P1-2A which is a functional precursor of the structural proteins, VP0 which is a VP4-VP2 precursor, VP1-2A precursor, 3ABC precursor which is a stable and catalytically active precursor of 3A, 3B and 3C proteins, 3AB and 3CD precursors. The assembly signal 2A is removed from VP1-2A by a host protease, possibly host Cathepsin L. This cleavage occurs over a region of 3 amino-acids probably generating VP1 proteins with heterogeneous C-termini. During virion maturation, immature virions are rendered infectious following cleavage of VP0 into VP4 and VP2. This maturation seems to be an autocatalytic event triggered by the presence of RNA in the capsid and is followed by a conformational change of the particle. Post-translationally, the assembly signal 2A is removed from VP1-2A by a host protease, possibly host Cathepsin L in naked virions. This cleavage does not occur in enveloped virions. This cleavage occurs over a region of 3 amino-acids probably generating VP1 proteins with heterogeneous C-termini. In terms of processing, VPg is uridylylated prior to priming replication into VPg-pUpU. Unlike other picornaviruses, does not seem to be myristoylated.

It localises to the virion. It is found in the host endosome. The protein resides in the host multivesicular body. Its subcellular location is the host membrane. The protein localises to the host mitochondrion outer membrane. It localises to the host cytoplasm. It is found in the host cytoplasmic vesicle membrane. It catalyses the reaction RNA(n) + a ribonucleoside 5'-triphosphate = RNA(n+1) + diphosphate. The enzyme catalyses a ribonucleoside 5'-triphosphate + H2O = a ribonucleoside 5'-diphosphate + phosphate + H(+). The catalysed reaction is Selective cleavage of Gln-|-Gly bond in the poliovirus polyprotein. In other picornavirus reactions Glu may be substituted for Gln, and Ser or Thr for Gly.. Capsid proteins VP1, VP2, and VP3 form a closed capsid enclosing the viral positive strand RNA genome. All these proteins contain a beta-sheet structure called beta-barrel jelly roll. Together they form an icosahedral capsid (T=3) composed of 60 copies of each VP1, VP2, and VP3, with a diameter of approximately 300 Angstroms. VP1 is situated at the 12 fivefold axes, whereas VP2 and VP3 are located at the quasi-sixfold axes. The naked capsid interacts with the host receptor HAVCR1 to provide virion attachment to and probably entry into the target cell. In terms of biological role, VP0 precursor is a component of the immature procapsids. Functionally, plays a role in the assembly of the 12 pentamers into an icosahedral structure. Has not been detected in mature virions, supposedly owing to its small size. Its function is as follows. Precursor component of immature procapsids that corresponds to an extended form of the structural protein VP1. After maturation, possibly by the host Cathepsin L, the assembly signal 2A is cleaved to give rise to the mature VP1 protein. Functions as a viroporin. Affects membrane integrity and causes an increase in membrane permeability. Involved in host intracellular membrane rearrangements probably to give rise to the viral factories. Does not disrupt calcium homeostasis or glycoprotein trafficking. Antagonizes the innate immune response of the host by suppressing IFN-beta synthesis, which it achieves by interfering with the RIG-I/IFIH1 pathway. In terms of biological role, affects membrane integrity and causes an increase in membrane permeability. Functionally, associates with and induces structural rearrangements of intracellular membranes. Displays RNA-binding activity. Its function is as follows. The precursor 3ABC is targeted to the mitochondrial membrane where protease 3C activity cleaves and inhibits the host antiviral protein MAVS, thereby disrupting activation of IRF3 through the IFIH1/MDA5 pathway. In vivo, the protease activity of 3ABC precursor is more efficient in cleaving the 2BC precursor than that of protein 3C. The 3ABC precursor may therefore play a role in the proteolytic processing of the polyprotein. Possible viroporin. Interacts with the 3CD precursor and with RNA structures found at both the 5'- and 3'-termini of the viral genome. Since the 3AB precursor contains the hydrophobic domain 3A, it probably anchors the whole viral replicase complex to intracellular membranes on which viral RNA synthesis occurs. In terms of biological role, may serve as membrane anchor to the 3AB and 3ABC precursors via its hydrophobic domain. May interact with RNA. Functionally, acts as a primer for viral RNA replication and remains covalently bound to viral genomic RNA. VPg is uridylylated prior to priming replication into VPg-pUpU. The VPg-pUpU is then used as primer on the genomic RNA poly(A) by the RNA-dependent RNA polymerase to replicate the viral genome. Its function is as follows. Cysteine protease that generates mature viral proteins from the precursor polyprotein. In addition to its proteolytic activity, it binds to viral RNA, and thus influences viral genome replication. RNA and substrate bind cooperatively to the protease. Cleaves IKBKG/NEMO to impair innate immune signaling. Cleaves host PABPC1 which may participate in the switch of viral translation to RNA synthesis. Interacts with the 3AB precursor and with RNA structures found at both the 5'- and 3'-termini of the viral genome. Disrupts TLR3 signaling by degrading the host adapter protein TICAM1/TRIF. In terms of biological role, RNA-directed RNA polymerase 3D-POL replicates genomic and antigenomic RNA by recognizing replications specific signals. This Homo sapiens (Human) protein is Genome polyprotein.